The chain runs to 384 residues: SAGA complex subunit Spt3 (384 aa).

It belongs to the SPT3 family. Component of the Spt-Ada-Gcn5 acetyltransferase (SAGA) complex consisting of wda/Taf5L, Saf6, Taf9, Taf10b, Taf12, Ada1, Spt3, Spt7, Spt20, Sf3b3, Sf3b5, Nipped-A/Tra1, a histone acetyltransferase (HAT) module made up of Gcn5, Ada2b (Isoform B), Ada3 and Sgf29, and a deubiquitinase (DUB) module made up of not/nonstop, Sgf11 and e(y)2 tethered to SAGA by Atxn7. Taf5 and Taf10, which has partially redundant properties with Taf10b, may also be part of this complex.

It is found in the nucleus. Its subcellular location is the chromosome. Component of the transcription regulatory complex SAGA, a multiprotein complex that activates transcription by remodeling chromatin and mediating histone acetylation and deubiquitination. The SAGA complex predominantly acetylates histone H3. Required for oogenesis; involved in transcriptional activation. In Drosophila melanogaster (Fruit fly), this protein is SAGA complex subunit Spt3.